The sequence spans 312 residues: DNA-directed RNA polymerase subunit alpha (312 aa).

The interval 1 to 229 (MLQYQIDRIE…ELFQPLATVT (229 aa)) is alpha N-terminal domain (alpha-NTD). The tract at residues 245–312 (QIPLEELNLS…ISIPQSRTSA (68 aa)) is alpha C-terminal domain (alpha-CTD).

This sequence belongs to the RNA polymerase alpha chain family. As to quaternary structure, in cyanobacteria the RNAP catalytic core is composed of 2 alpha, 1 beta, 1 beta', 1 gamma and 1 omega subunit. When a sigma factor is associated with the core the holoenzyme is formed, which can initiate transcription.

The enzyme catalyses RNA(n) + a ribonucleoside 5'-triphosphate = RNA(n+1) + diphosphate. In terms of biological role, DNA-dependent RNA polymerase catalyzes the transcription of DNA into RNA using the four ribonucleoside triphosphates as substrates. In Prochlorococcus marinus (strain MIT 9313), this protein is DNA-directed RNA polymerase subunit alpha.